The primary structure comprises 196 residues: UPF0134 protein MPN_501 (196 aa).

It belongs to the UPF0134 family.

The sequence is that of UPF0134 protein MPN_501 from Mycoplasma pneumoniae (strain ATCC 29342 / M129 / Subtype 1) (Mycoplasmoides pneumoniae).